The sequence spans 494 residues: GTPase Der (494 aa).

2 consecutive EngA-type G domains span residues 2 to 164 (KKIA…PEED) and 235 to 407 (IKIS…KNYS). GTP is bound by residues 8 to 15 (GRPNVGKS), 55 to 59 (DTGGL), 116 to 119 (NKID), 241 to 248 (GRTNVGKS), 288 to 292 (DTAGL), and 352 to 355 (NKWD). Residues 408-492 (QHIKTSELNV…PVLFKAKKRG (85 aa)) enclose the KH-like domain.

It belongs to the TRAFAC class TrmE-Era-EngA-EngB-Septin-like GTPase superfamily. EngA (Der) GTPase family. As to quaternary structure, associates with the 50S ribosomal subunit.

GTPase that plays an essential role in the late steps of ribosome biogenesis. The sequence is that of GTPase Der from Sulfurimonas denitrificans (strain ATCC 33889 / DSM 1251) (Thiomicrospira denitrificans (strain ATCC 33889 / DSM 1251)).